A 295-amino-acid chain; its full sequence is tRNA-cytidine(32) 2-sulfurtransferase (295 aa).

The PP-loop motif signature appears at 59 to 64; sequence SGGKDS. Positions 134, 137, and 225 each coordinate [4Fe-4S] cluster.

The protein belongs to the TtcA family. As to quaternary structure, homodimer. Mg(2+) serves as cofactor. Requires [4Fe-4S] cluster as cofactor.

The protein resides in the cytoplasm. It catalyses the reaction cytidine(32) in tRNA + S-sulfanyl-L-cysteinyl-[cysteine desulfurase] + AH2 + ATP = 2-thiocytidine(32) in tRNA + L-cysteinyl-[cysteine desulfurase] + A + AMP + diphosphate + H(+). The protein operates within tRNA modification. Its function is as follows. Catalyzes the ATP-dependent 2-thiolation of cytidine in position 32 of tRNA, to form 2-thiocytidine (s(2)C32). The sulfur atoms are provided by the cysteine/cysteine desulfurase (IscS) system. In Ruegeria sp. (strain TM1040) (Silicibacter sp.), this protein is tRNA-cytidine(32) 2-sulfurtransferase.